A 149-amino-acid chain; its full sequence is Protegrin-5 (149 aa).

Positions methionine 1–alanine 29 are cleaved as a signal peptide. Residues glutamine 30–valine 130 constitute a propeptide that is removed on maturation. The disordered stretch occupies residues aspartate 61–valine 80. Cystine bridges form between cysteine 85–cysteine 96, cysteine 107–cysteine 124, cysteine 136–cysteine 145, and cysteine 138–cysteine 143. Arginine 148 carries the post-translational modification Arginine amide.

It belongs to the cathelicidin family.

It localises to the secreted. Functionally, microbicidal activity. The sequence is that of Protegrin-5 (NPG5) from Sus scrofa (Pig).